A 302-amino-acid polypeptide reads, in one-letter code: MIRKYNLYQIDSFTKEKFTGNPAGVITNADGLTDYEMQKIARELNNSETAFIFSSKDERYDAWVRFFTPTSEVPICGHATIAAHYARAIENNLETSRVYHKTGAGILPVDVIKENDDYKIIMTQGKIEFGSVIDGEKKEKLLRALNIEKSDLLENYKIQIVSTGHSKVMIGIKSLKTLNKLQPNYDVLSKLSKIIKCNGYYVFAVTSEDSDILIHGRMFAPAIGINEDPVTGNANGPLGAYLVHHKLACYDNSIFKFKAKQGEAIGRQGIIEVEVRVDKEEPVEVKISGNAVVVFKSELVLN.

E48 is an active-site residue.

Belongs to the PhzF family.

This is an uncharacterized protein from Clostridium acetobutylicum (strain ATCC 824 / DSM 792 / JCM 1419 / IAM 19013 / LMG 5710 / NBRC 13948 / NRRL B-527 / VKM B-1787 / 2291 / W).